We begin with the raw amino-acid sequence, 706 residues long: Forkhead box protein P2 (706 aa).

Over residues Met1 to Asp28 the composition is skewed to polar residues. 2 disordered regions span residues Met1–Ser45 and Ile275–His305. The segment covering Ser287–Ser296 has biased composition (low complexity). A C2H2-type zinc finger spans residues Gly337–His362. Residues Val379–Leu400 form a leucine-zipper region. A ctbp1-binding region spans residues Pro413–Val417. Positions Arg495–Leu585 form a DNA-binding region, fork-head. The segment at Asp672 to Glu706 is disordered. A compositionally biased stretch (acidic residues) spans Leu690–Glu706.

In terms of assembly, dimerization is required for DNA-binding. As to expression, at stage 15, expressed in the anterior/superior eye field and the caudal branchial arch. At later stages, expression persists in the retina and in the caudal branchial arch. Expressed in the pronephros and the tip of the tail. Beginning with stage 35, expression in the brain is localized to distinct subdomains of the anterior prosencephalon, the medial mesencephalon and to lateral domains of the hindbrain.

It is found in the nucleus. Functionally, transcriptional repressor. The protein is Forkhead box protein P2 of Xenopus laevis (African clawed frog).